The following is a 426-amino-acid chain: Phosphoribosylamine--glycine ligase (426 aa).

The ATP-grasp domain occupies Lys113–Thr320. ATP is bound at residue Leu139–Ser200. Residues Glu290 and Asn292 each contribute to the Mg(2+) site.

Belongs to the GARS family. The cofactor is Mg(2+). It depends on Mn(2+) as a cofactor.

The enzyme catalyses 5-phospho-beta-D-ribosylamine + glycine + ATP = N(1)-(5-phospho-beta-D-ribosyl)glycinamide + ADP + phosphate + H(+). It functions in the pathway purine metabolism; IMP biosynthesis via de novo pathway; N(1)-(5-phospho-D-ribosyl)glycinamide from 5-phospho-alpha-D-ribose 1-diphosphate: step 2/2. This is Phosphoribosylamine--glycine ligase from Leptospira interrogans serogroup Icterohaemorrhagiae serovar copenhageni (strain Fiocruz L1-130).